The sequence spans 201 residues: Large ribosomal subunit protein bL25 (201 aa).

It belongs to the bacterial ribosomal protein bL25 family. CTC subfamily. As to quaternary structure, part of the 50S ribosomal subunit; part of the 5S rRNA/L5/L18/L25 subcomplex. Contacts the 5S rRNA. Binds to the 5S rRNA independently of L5 and L18.

This is one of the proteins that binds to the 5S RNA in the ribosome where it forms part of the central protuberance. This Burkholderia multivorans (strain ATCC 17616 / 249) protein is Large ribosomal subunit protein bL25.